Here is a 224-residue protein sequence, read N- to C-terminus: Urease accessory protein UreF (224 aa).

It belongs to the UreF family. In terms of assembly, ureD, UreF and UreG form a complex that acts as a GTP-hydrolysis-dependent molecular chaperone, activating the urease apoprotein by helping to assemble the nickel containing metallocenter of UreC. The UreE protein probably delivers the nickel.

The protein localises to the cytoplasm. Functionally, required for maturation of urease via the functional incorporation of the urease nickel metallocenter. This chain is Urease accessory protein UreF, found in Klebsiella pneumoniae (strain 342).